We begin with the raw amino-acid sequence, 132 residues long: Phycocyanin PC645 alpha-1 subunit (132 aa).

(2R,3E)-phycocyanobilin contacts are provided by D54 and R68. Mesobiliverdin is bound by residues C70, Q76, Y77, and K92. 15,16-dihydrobiliverdin-binding residues include P123 and I125.

It belongs to the phycoerythrin family. In terms of assembly, heterotetramer of 2 different alpha chains and 2 identical beta chains which form 2 alpha-beta heterodimers within the heterotetramer. In terms of processing, contains two phycocyanobilin chromophores, one mesobiliverdin chromophore and one 15,16-dihydrobiliverdin chromophore with binding mediated by both the alpha and beta subunits.

It is found in the plastid. The protein resides in the chloroplast thylakoid membrane. In terms of biological role, light-harvesting photosynthetic tetrapyrrole chromophore-protein from the phycobiliprotein complex. The chain is Phycocyanin PC645 alpha-1 subunit from Chroomonas sp. (strain CCMP270).